Reading from the N-terminus, the 507-residue chain is Tryptamine 4-monooxygenase (507 aa).

The signal sequence occupies residues 1-19; it reads MIVLLVSLVLAGCIYYANA. The segment at 403–425 is disordered; sequence PNPSEFRPERYLSSDGKPDPTVR. Over residues 408–425 the composition is skewed to basic and acidic residues; that stretch reads FRPERYLSSDGKPDPTVR. Heme is bound at residue Cys439.

It belongs to the cytochrome P450 family. The cofactor is heme.

The catalysed reaction is tryptamine + AH2 + O2 = 4-hydroxytryptamine + A + H2O. The protein operates within secondary metabolite biosynthesis. Its function is as follows. Tryptamine 4-monooxygenase; part of the gene cluster that mediates the biosynthesis of psilocybin, a psychotropic tryptamine-derived natural product. The first step in the pathway is the decarboxylation of L-tryptophan to tryptamine by the decarboxylase psiD. PsiD does not decarboxylate phenylalanine, tyrosine, or 5-hydroxy- L -tryptophan (5-HTP). 4-hydroxy-L-tryptophan is accepted as substrate by psiD as well. The cytochrome P450 monooxygenase psiH then converts tryptamine to 4-hydroxytryptamine. The kinase psiK catalyzes the 4-O-phosphorylation step by converting 4-hydroxytryptamine into norbaeocystin. The methyltransferase psiM then catalyzes iterative methyl transfer to the amino group of norbaeocystin to yield psilocybin via a monomethylated intermediate, baeocystin. This is Tryptamine 4-monooxygenase from Psilocybe cyanescens.